Reading from the N-terminus, the 127-residue chain is Large ribosomal subunit protein bL12 (127 aa).

The interval 101 to 127 (VKTGVSKEEAEDAKKQLVESGAEVEIK) is disordered. A compositionally biased stretch (basic and acidic residues) spans 105-117 (VSKEEAEDAKKQL).

The protein belongs to the bacterial ribosomal protein bL12 family. Homodimer. Part of the ribosomal stalk of the 50S ribosomal subunit. Forms a multimeric L10(L12)X complex, where L10 forms an elongated spine to which 2 to 4 L12 dimers bind in a sequential fashion. Binds GTP-bound translation factors.

In terms of biological role, forms part of the ribosomal stalk which helps the ribosome interact with GTP-bound translation factors. Is thus essential for accurate translation. The polypeptide is Large ribosomal subunit protein bL12 (Geobacter metallireducens (strain ATCC 53774 / DSM 7210 / GS-15)).